The primary structure comprises 61 residues: Large ribosomal subunit protein uL30 (61 aa).

This sequence belongs to the universal ribosomal protein uL30 family. Part of the 50S ribosomal subunit.

In Mycolicibacterium gilvum (strain PYR-GCK) (Mycobacterium gilvum (strain PYR-GCK)), this protein is Large ribosomal subunit protein uL30.